We begin with the raw amino-acid sequence, 212 residues long: MKPPSSIQTSEFDSSDEEPIEDEQTPIQISWLPLSRVNYSQFLGLCALPGCKFKDVRRNIQKDTEELKSCGIQDVFVFCTRGELSKYRVPNLLDLYHQYGIITHHHPIPDGGAPDIASCCEIMEELEICLQNNRKTLIHCYGGLGRSCLVAACLLLYLSDTVSPQQAIDSLRDLRGSGAIQTIKQYNYLHEFRDKLAAHLSSRESLSRSVSR.

Polar residues predominate over residues 1–12 (MKPPSSIQTSEF). Positions 1-23 (MKPPSSIQTSEFDSSDEEPIEDE) are disordered. The interaction with CDK2 stretch occupies residues 1-34 (MKPPSSIQTSEFDSSDEEPIEDEQTPIQISWLPL). The segment covering 13–23 (DSSDEEPIEDE) has biased composition (acidic residues). A Tyrosine-protein phosphatase domain is found at 32–201 (LPLSRVNYSQ…FRDKLAAHLS (170 aa)). The active-site Phosphocysteine intermediate is cysteine 140.

The protein belongs to the protein-tyrosine phosphatase family. As to quaternary structure, interacts with cyclin-dependent kinases such as CDK1, CDK2 and CDK3. Does not interact with CDK4. Interacts (via C-terminus) with phosphorylated CDK2 (via C-terminal helix). Interacts with MS4A3 (via C-terminus); the interaction enhances CDKN3 enzymatic activity.

Its subcellular location is the cytoplasm. The protein resides in the perinuclear region. The catalysed reaction is O-phospho-L-tyrosyl-[protein] + H2O = L-tyrosyl-[protein] + phosphate. It carries out the reaction O-phospho-L-seryl-[protein] + H2O = L-seryl-[protein] + phosphate. It catalyses the reaction O-phospho-L-threonyl-[protein] + H2O = L-threonyl-[protein] + phosphate. In terms of biological role, may play a role in cell cycle regulation. Dual specificity phosphatase active toward substrates containing either phosphotyrosine or phosphoserine residues. Dephosphorylates CDK2 at 'Thr-160' in a cyclin-dependent manner. In Sus scrofa (Pig), this protein is Cyclin-dependent kinase inhibitor 3.